We begin with the raw amino-acid sequence, 516 residues long: Bifunctional pantoate ligase/cytidylate kinase (516 aa).

Positions 1–279 (MVRKIFQTNA…CGSTRLIDHT (279 aa)) are pantoate--beta-alanine ligase. ATP is bound at residue 29–36 (MGGLHPGH). Residue His36 is the Proton donor of the active site. (R)-pantoate is bound at residue Gln64. Position 64 (Gln64) interacts with beta-alanine. 153-156 (GEKD) lines the ATP pocket. Gln159 serves as a coordination point for (R)-pantoate. Residue 190–193 (YSSR) coordinates ATP. The interval 280-516 (FLMHRKPIIA…PEEVWPTPNS (237 aa)) is cytidylate kinase.

The protein in the N-terminal section; belongs to the pantothenate synthetase family. It in the C-terminal section; belongs to the cytidylate kinase family. Type 1 subfamily.

The protein localises to the cytoplasm. The catalysed reaction is (R)-pantoate + beta-alanine + ATP = (R)-pantothenate + AMP + diphosphate + H(+). It carries out the reaction CMP + ATP = CDP + ADP. The enzyme catalyses dCMP + ATP = dCDP + ADP. The protein operates within cofactor biosynthesis; (R)-pantothenate biosynthesis; (R)-pantothenate from (R)-pantoate and beta-alanine: step 1/1. Its function is as follows. Catalyzes the condensation of pantoate with beta-alanine in an ATP-dependent reaction via a pantoyl-adenylate intermediate. Catalyzes the transfer of a phosphate group from ATP to either CMP or dCMP to form CDP or dCDP and ADP, respectively. The protein is Bifunctional pantoate ligase/cytidylate kinase of Prochlorococcus marinus (strain NATL1A).